The chain runs to 372 residues: MKVSVLAAVAAFAAATAIAGPVRPAGVGNDKYLIELAPGKTQWVTKNEKHQMKAAGQTFIDITDEFGTGFTASQPVSANYPKNSRHSSIVAPIIANLSKENLMRDLKAMIEFNNRYYESQTGVESATWLMEQVQKAIDASGIQGAKVEKFENQFQQFSIIATIPGSESTVVIGAHQDSINEQDPEGGRAPGADDNGSGSVVVLEALRGVLGSKALQAANNTNTMEFHWYAGEEGGLLGSNAIFKKYKSDGRQIKAMLNQDLAGFVKKGGPEQFGLITDNTNQELNQFCKMIVKKYASIPIVDTKCGYACSDHASADRSGFPASMVAETAFRDSNPHIHSADDVTDYLDFDHMLEHAKVAVGFMTELAMASNL.

Residues 1–19 form the signal peptide; it reads MKVSVLAAVAAFAAATAIA. Asparagine 96 is a glycosylation site (N-linked (GlcNAc...) asparagine). Histidine 175 and aspartate 194 together coordinate Zn(2+). 2 N-linked (GlcNAc...) asparagine glycosylation sites follow: asparagine 195 and asparagine 219. Zn(2+) is bound by residues glutamate 233 and aspartate 260. A disulfide bridge connects residues cysteine 305 and cysteine 309. Histidine 338 provides a ligand contact to Zn(2+).

The protein belongs to the peptidase M28 family. M28E subfamily. As to quaternary structure, monomer. The cofactor is Zn(2+).

The protein localises to the secreted. Probable extracellular aminopeptidase which contributes to pathogenicity. This Arthroderma otae (strain ATCC MYA-4605 / CBS 113480) (Microsporum canis) protein is Probable leucine aminopeptidase MCYG_08380.